A 572-amino-acid chain; its full sequence is Proline--tRNA ligase (572 aa).

This sequence belongs to the class-II aminoacyl-tRNA synthetase family. ProS type 1 subfamily. In terms of assembly, homodimer.

It is found in the cytoplasm. It catalyses the reaction tRNA(Pro) + L-proline + ATP = L-prolyl-tRNA(Pro) + AMP + diphosphate. Functionally, catalyzes the attachment of proline to tRNA(Pro) in a two-step reaction: proline is first activated by ATP to form Pro-AMP and then transferred to the acceptor end of tRNA(Pro). As ProRS can inadvertently accommodate and process non-cognate amino acids such as alanine and cysteine, to avoid such errors it has two additional distinct editing activities against alanine. One activity is designated as 'pretransfer' editing and involves the tRNA(Pro)-independent hydrolysis of activated Ala-AMP. The other activity is designated 'posttransfer' editing and involves deacylation of mischarged Ala-tRNA(Pro). The misacylated Cys-tRNA(Pro) is not edited by ProRS. This Enterobacter sp. (strain 638) protein is Proline--tRNA ligase.